A 145-amino-acid polypeptide reads, in one-letter code: Large ribosomal subunit protein uL13 (145 aa).

Belongs to the universal ribosomal protein uL13 family. As to quaternary structure, part of the 50S ribosomal subunit.

Functionally, this protein is one of the early assembly proteins of the 50S ribosomal subunit, although it is not seen to bind rRNA by itself. It is important during the early stages of 50S assembly. The protein is Large ribosomal subunit protein uL13 of Geobacillus kaustophilus (strain HTA426).